A 618-amino-acid chain; its full sequence is uncharacterized protein (618 aa).

Disordered regions lie at residues 70 to 118, 330 to 352, 456 to 552, and 587 to 618; these read SSEY…SLPR, LTAR…EVPC, TLPV…PILT, and IPSD…LKTL. 2 stretches are compositionally biased toward basic and acidic residues: residues 74–84 and 333–343; these read KGTRRDSRGYE and RTEEEPERHVP. A compositionally biased stretch (low complexity) spans 463–481; the sequence is TSRPQSPSSLSSKTTGLPL. Composition is skewed to polar residues over residues 485–516 and 609–618; these read KPTS…NSLM and SDPSHSLKTL.

This is an uncharacterized protein from Danio rerio (Zebrafish).